The sequence spans 858 residues: Zinc finger protein ZXDC (858 aa).

2 disordered regions span residues 1–127 (MDLP…APAG) and 151–174 (PGPA…STPG). Composition is skewed to low complexity over residues 23 to 35 (PLRR…GASP), 84 to 97 (GGAA…QEAE), and 151 to 171 (PGPA…SGPS). Position 34 is a phosphoserine (S34). Position 172 is a phosphothreonine (T172). 10 consecutive C2H2-type zinc fingers follow at residues 175-199 (YRCP…LLTH), 208-232 (FKCP…LQSH), 238-262 (FGCP…MKGH), 268-290 (FKCE…QRSH), 297-321 (YKCD…NRAH), 328-352 (FSCS…LRSH), 358-382 (FICD…RRKH), 388-412 (FTCP…SITH), 418-442 (FECP…SKKH), and 451-476 (SRCP…VRQH). A required for transcriptional activation region spans residues 579-688 (DSPLVLGTAA…HGLPQSTLPS (110 aa)). K660 participates in a covalent cross-link: Glycyl lysine isopeptide (Lys-Gly) (interchain with G-Cter in SUMO). Disordered regions lie at residues 660–696 (KVEP…HGAQ), 726–756 (KEKK…SPPH), and 837–858 (GGPA…QDLQ). S665 carries the post-translational modification Phosphoserine. Polar residues predominate over residues 675–687 (QEGSHGLPQSTLP). The segment at 781–858 (PAAGVQCGAQ…GSTINLQDLQ (78 aa)) is interaction with CIITA. Over residues 847–858 (FPGSTINLQDLQ) the composition is skewed to polar residues.

It belongs to the ZXD family. In terms of assembly, self-associates. Interacts with ZXDA and CIITA. Sumoylated at Lys-660 with SUMO1, SUMO2 and SUMO3; sumoylation enhances the activity of the transcriptional activation domain. Expressed at high levels in heart, kidney, liver and testis, at moderate levels in brain and stomach, and at low levels in lung, muscle, placenta, small intestine and spleen.

It is found in the nucleus. Cooperates with CIITA to promote transcription of MHC class I and MHC class II genes. The protein is Zinc finger protein ZXDC (ZXDC) of Homo sapiens (Human).